A 182-amino-acid polypeptide reads, in one-letter code: Bifunctional protein PyrR (182 aa).

The short motif at valine 100–threonine 112 is the PRPP-binding element.

Belongs to the purine/pyrimidine phosphoribosyltransferase family. PyrR subfamily. Homodimer and homohexamer; in equilibrium.

It catalyses the reaction UMP + diphosphate = 5-phospho-alpha-D-ribose 1-diphosphate + uracil. Regulates transcriptional attenuation of the pyrimidine nucleotide (pyr) operon by binding in a uridine-dependent manner to specific sites on pyr mRNA. This disrupts an antiterminator hairpin in the RNA and favors formation of a downstream transcription terminator, leading to a reduced expression of downstream genes. In terms of biological role, also displays a weak uracil phosphoribosyltransferase activity which is not physiologically significant. The sequence is that of Bifunctional protein PyrR from Natranaerobius thermophilus (strain ATCC BAA-1301 / DSM 18059 / JW/NM-WN-LF).